The following is an 876-amino-acid chain: GRB2-associated and regulator of MAPK protein (876 aa).

Residues 12–320 form a CABIT region; that stretch reads KDVKWSPVAM…HQVKGDMWPE (309 aa). Position 105 is a phosphotyrosine (tyrosine 105). Residues 427–448 are disordered; sequence GDSGSDYLFPEANEESAGIPGK. A Phosphotyrosine modification is found at tyrosine 453. Disordered stretches follow at residues 460–501 and 530–572; these read EGKP…ATLG and LNAP…SYYS. The segment at 498-550 is necessary for interaction with GRB2; the sequence is ATLGATIKSSEIALPPPPVPPKSEAVREECRLLNAPPVPPRSAKPLSTSPSIP. Residues 560–572 are compositionally biased toward polar residues; sequence QTRSPSPTLSYYS. Serine 609 and serine 613 each carry phosphoserine. Composition is skewed to polar residues over residues 630 to 639 and 647 to 657; these read SGASENQTRS and RSYSYPRQKTP. Disordered regions lie at residues 630 to 664 and 722 to 759; these read SGAS…KRTC and CPAL…TAGS. The region spanning 811 to 876 is the SAM domain; that stretch reads LSIEEVSKSL…QFINGWRPKI (66 aa).

It belongs to the GAREM family. In terms of assembly, interacts with EGFR. Interacts (via proline-rich domain and phosphorylated at Tyr-105 and Tyr-453) with GRB2 (via SH3 domains); the interaction occurs upon EGF stimulation. Interacts (phosphorylated at Tyr-453) with PTPN11; the interaction increases MAPK/ERK activity and does not affect the GRB2/SOS complex formation. Post-translationally, on EGF stimulation, phosphorylated on Tyr-105 and Tyr-453.

Its function is as follows. Acts as an adapter protein that plays a role in intracellular signaling cascades triggered either by the cell surface activated epidermal growth factor receptor and/or cytoplasmic protein tyrosine kinases. Promotes activation of the MAPK/ERK signaling pathway. Plays a role in the regulation of cell proliferation. This Mus musculus (Mouse) protein is GRB2-associated and regulator of MAPK protein (Garem1).